Consider the following 144-residue polypeptide: Transcriptional regulator SlyA (144 aa).

One can recognise an HTH marR-type domain in the interval 2–135; it reads ESPLGSDLAR…LIKLIAKLEH (134 aa). The H-T-H motif DNA-binding region spans 49 to 72; the sequence is QIQLAKAIGIEQPSLVRTLDQLED.

The protein belongs to the SlyA family. In terms of assembly, homodimer.

Its subcellular location is the cytoplasm. In terms of biological role, transcription regulator that can specifically activate or repress expression of target genes. Required for virulence and survival in the macrophage environment. Probably activates the transcription of ssrB. Independently of ssrB activation, capable of stimulating the expression of virulence genes found on pathogenicity island 2 (SPI2). Probably activates expression of ispA, xseB genes, and of omp operon. This Salmonella typhimurium (strain LT2 / SGSC1412 / ATCC 700720) protein is Transcriptional regulator SlyA.